Consider the following 462-residue polypeptide: Glycine--tRNA ligase (462 aa).

2 residues coordinate substrate: arginine 100 and glutamate 174. ATP-binding positions include 206 to 208 (RNE), 216 to 221 (FRTREF), 290 to 291 (EL), and 334 to 337 (GVDR). Residue 221-225 (FEQME) participates in substrate binding. 330–334 (EPSVG) contributes to the substrate binding site.

The protein belongs to the class-II aminoacyl-tRNA synthetase family. In terms of assembly, homodimer.

It localises to the cytoplasm. The catalysed reaction is tRNA(Gly) + glycine + ATP = glycyl-tRNA(Gly) + AMP + diphosphate. Catalyzes the attachment of glycine to tRNA(Gly). The polypeptide is Glycine--tRNA ligase (Alkaliphilus oremlandii (strain OhILAs) (Clostridium oremlandii (strain OhILAs))).